The following is a 380-amino-acid chain: Anhydro-N-acetylmuramic acid kinase (380 aa).

An ATP-binding site is contributed by 9 to 16 (GTSVDGID).

The protein belongs to the anhydro-N-acetylmuramic acid kinase family.

The enzyme catalyses 1,6-anhydro-N-acetyl-beta-muramate + ATP + H2O = N-acetyl-D-muramate 6-phosphate + ADP + H(+). The protein operates within amino-sugar metabolism; 1,6-anhydro-N-acetylmuramate degradation. It participates in cell wall biogenesis; peptidoglycan recycling. Catalyzes the specific phosphorylation of 1,6-anhydro-N-acetylmuramic acid (anhMurNAc) with the simultaneous cleavage of the 1,6-anhydro ring, generating MurNAc-6-P. Is required for the utilization of anhMurNAc either imported from the medium or derived from its own cell wall murein, and thus plays a role in cell wall recycling. This is Anhydro-N-acetylmuramic acid kinase from Cyanothece sp. (strain PCC 7425 / ATCC 29141).